We begin with the raw amino-acid sequence, 170 residues long: Protein AIG2 A (170 aa).

15–20 (YGSFQE) provides a ligand contact to substrate. Catalysis depends on glutamate 83, which acts as the Proton acceptor. The segment covering 147–162 (KNPNGRSREEFEKFVQ) has biased composition (basic and acidic residues). The disordered stretch occupies residues 147–170 (KNPNGRSREEFEKFVQDDSSPASA).

Belongs to the gamma-glutamylcyclotransferase family. Ubiquitous.

In terms of biological role, putative gamma-glutamylcyclotransferase. This chain is Protein AIG2 A, found in Arabidopsis thaliana (Mouse-ear cress).